We begin with the raw amino-acid sequence, 688 residues long: UvrABC system protein B (688 aa).

A Helicase ATP-binding domain is found at 31–414 (GRITAGETDV…LGIADGVVEQ (384 aa)). An ATP-binding site is contributed by 44 to 51 (GATGTGKS). The Beta-hairpin signature appears at 97–120 (YYDYYQPEAYVPQTDTFIEKDSSI). The region spanning 434–600 (QIDDLLEEIR…PLRKRIADIT (167 aa)) is the Helicase C-terminal domain. Positions 614-633 (LAGRDQKRKSPTPSLRSGGI) are disordered. A UVR domain is found at 642–677 (ESLIADLNAQMLAAAGELKFELAARLRDELSDLKRD).

Belongs to the UvrB family. Forms a heterotetramer with UvrA during the search for lesions. Interacts with UvrC in an incision complex.

It is found in the cytoplasm. Functionally, the UvrABC repair system catalyzes the recognition and processing of DNA lesions. A damage recognition complex composed of 2 UvrA and 2 UvrB subunits scans DNA for abnormalities. Upon binding of the UvrA(2)B(2) complex to a putative damaged site, the DNA wraps around one UvrB monomer. DNA wrap is dependent on ATP binding by UvrB and probably causes local melting of the DNA helix, facilitating insertion of UvrB beta-hairpin between the DNA strands. Then UvrB probes one DNA strand for the presence of a lesion. If a lesion is found the UvrA subunits dissociate and the UvrB-DNA preincision complex is formed. This complex is subsequently bound by UvrC and the second UvrB is released. If no lesion is found, the DNA wraps around the other UvrB subunit that will check the other stand for damage. The protein is UvrABC system protein B of Leifsonia xyli subsp. xyli (strain CTCB07).